The following is a 675-amino-acid chain: Zeaxanthin epoxidase, chloroplastic (675 aa).

The transit peptide at 1-25 directs the protein to the chloroplast; sequence MASTVLYNSLTTSTTVFLRSHLPIS. FAD contacts are provided by residues 92 to 120 and 370 to 383; these read RILV…KVFE and KLTW…LLGD. In terms of domain architecture, FHA spans 558–622; that stretch reads ICLSRKEDEP…HGTWITDNEG (65 aa).

It depends on FAD as a cofactor.

Its subcellular location is the plastid. The protein localises to the chloroplast thylakoid membrane. It catalyses the reaction all-trans-zeaxanthin + 4 reduced [2Fe-2S]-[ferredoxin] + 2 O2 + 4 H(+) = all-trans-violaxanthin + 4 oxidized [2Fe-2S]-[ferredoxin] + 2 H2O. It participates in plant hormone biosynthesis; abscisate biosynthesis. Its activity is regulated as follows. Inhibited by diphenyleneiodonium (DPI). Functionally, converts zeaxanthin into antheraxanthin and subsequently violaxanthin. Involved in the epoxidation of zeaxanthin. The polypeptide is Zeaxanthin epoxidase, chloroplastic (Spinacia oleracea (Spinach)).